A 339-amino-acid chain; its full sequence is Protein FAM50A (339 aa).

The segment at 1–31 (MAQYKGAASEAGRAMHLMKKREKQREQMEQM) is disordered. An N-acetylalanine modification is found at Ala-2. Lys-100 is covalently cross-linked (Glycyl lysine isopeptide (Lys-Gly) (interchain with G-Cter in SUMO2)). The disordered stretch occupies residues 150-177 (TTKKKKLGKNPDVDTSFLPDRDREEEEN). Residues 152–155 (KKKK) carry the Nuclear localization signal motif. Residues 168-177 (PDRDREEEEN) are compositionally biased toward basic and acidic residues.

The protein belongs to the FAM50 family. Interacts with EFTUD2, a component of the spliceosome U5 complex. Interacts with DDX41, a component of the spliceosome C complex. Widely expressed in embryonic and adult tissues.

It localises to the nucleus. In terms of biological role, probably involved in the regulation of pre-mRNA splicing. This is Protein FAM50A (Fam50a) from Mus musculus (Mouse).